We begin with the raw amino-acid sequence, 491 residues long: HEPACAM family member 2 (491 aa).

Positions 1–18 are cleaved as a signal peptide; sequence MWLRVFTAFLSFTAGACS. N73, N117, and N153 each carry an N-linked (GlcNAc...) asparagine glycan. Ig-like C2-type domains lie at 137–221 and 223–319; these read PVVQ…SDII and PTIY…THFT. 2 cysteine pairs are disulfide-bonded: C158–C207 and C258–C303. Residue N308 is glycosylated (N-linked (GlcNAc...) asparagine). A helical transmembrane segment spans residues 340-360; sequence LASITGISLFLIISMCLLFLW. Over 361–491 the chain is Cytoplasmic; it reads KKFQPYKVIK…GKHSRAKQCI (131 aa). The span at 444–454 shows a compositional bias: polar residues; it reads QQQDHPESSSQ. Disordered regions lie at residues 444-466 and 472-491; these read QQQDHPESSSQDGEEDACLDRHD and ELGHCKEQDKGKHSRAKQCI. A compositionally biased stretch (basic and acidic residues) spans 472–482; it reads ELGHCKEQDKG.

Post-translationally, poly-ADP-ribosylated (PARsylated) by tankyrase TNKS during late G2 and prophase, leading to translocation to mitotic centrosomes. In terms of processing, N-glycosylated.

It localises to the golgi apparatus membrane. The protein localises to the cytoplasm. Its subcellular location is the cytoskeleton. It is found in the spindle. The protein resides in the microtubule organizing center. It localises to the centrosome. The protein localises to the midbody. Its function is as follows. Required during prometaphase for centrosome maturation. Following poly-ADP-ribosylation (PARsylation) by TNKS, translocates from the Golgi apparatus to mitotic centrosomes and plays a key role in the formation of robust microtubules for prompt movement of chromosomes: anchors AKAP9/CG-NAP, a scaffold protein of the gamma-tubulin ring complex and promotes centrosome maturation. The sequence is that of HEPACAM family member 2 (HEPACAM2) from Bos taurus (Bovine).